Consider the following 254-residue polypeptide: Phosphoribosylaminoimidazole-succinocarboxamide synthase (254 aa).

This sequence belongs to the SAICAR synthetase family.

It carries out the reaction 5-amino-1-(5-phospho-D-ribosyl)imidazole-4-carboxylate + L-aspartate + ATP = (2S)-2-[5-amino-1-(5-phospho-beta-D-ribosyl)imidazole-4-carboxamido]succinate + ADP + phosphate + 2 H(+). It functions in the pathway purine metabolism; IMP biosynthesis via de novo pathway; 5-amino-1-(5-phospho-D-ribosyl)imidazole-4-carboxamide from 5-amino-1-(5-phospho-D-ribosyl)imidazole-4-carboxylate: step 1/2. This chain is Phosphoribosylaminoimidazole-succinocarboxamide synthase, found in Rhizobium meliloti (strain 1021) (Ensifer meliloti).